Consider the following 176-residue polypeptide: Nutrient stress-induced DNA-binding protein (176 aa).

Belongs to the Dps family. In terms of assembly, hexamer.

In terms of biological role, involved in protection of chromosomal DNA from damage under nutrient-limited and oxidative stress conditions. Binds heme. This Synechococcus sp. (strain ATCC 27144 / PCC 6301 / SAUG 1402/1) (Anacystis nidulans) protein is Nutrient stress-induced DNA-binding protein (dpsA).